A 68-amino-acid chain; its full sequence is Large ribosomal subunit protein bL33c (68 aa).

This sequence belongs to the bacterial ribosomal protein bL33 family.

The protein localises to the plastid. The protein resides in the chloroplast. The sequence is that of Large ribosomal subunit protein bL33c from Lactuca sativa (Garden lettuce).